The chain runs to 518 residues: Lysine--tRNA ligase (518 aa).

Residues Glu407 and Glu414 each coordinate Mg(2+).

Belongs to the class-II aminoacyl-tRNA synthetase family. In terms of assembly, homodimer. Requires Mg(2+) as cofactor.

It is found in the cytoplasm. It catalyses the reaction tRNA(Lys) + L-lysine + ATP = L-lysyl-tRNA(Lys) + AMP + diphosphate. The protein is Lysine--tRNA ligase of Helicobacter hepaticus (strain ATCC 51449 / 3B1).